The following is a 657-amino-acid chain: Putative serine protease (657 aa).

Helical transmembrane passes span 4 to 24 (YLATSVRLCLMVCIVGWLLMP), 46 to 62 (WLLTGLSTWFCIVPSGT), and 109 to 131 (LLSGVTFSVVLWYPRILVTVLML). The Peptidase S39 domain occupies 239 to 434 (QPGSDFVECE…ETDRYARTME (196 aa)). Active-site for protease activity residues include histidine 284, aspartate 318, and serine 386. The segment at 513–605 (PLGGLPISNG…PPSTGSVPKS (93 aa)) is disordered. Residues 548–559 (HTRRRRRNKKKS) show a composition bias toward basic residues. A compositionally biased stretch (basic and acidic residues) spans 560-569 (KNSETGHGPE). The segment covering 571 to 589 (QSQQQSRPSSPIPDDSAPV) has biased composition (low complexity).

This sequence belongs to the peptidase S39B family.

The protein localises to the host membrane. Functionally, putative serine protease. The chain is Putative serine protease from Mushroom bacilliform virus (isolate Australia/AUS LF-1) (MBV).